The following is a 229-amino-acid chain: Flagellar L-ring protein (229 aa).

An N-terminal signal peptide occupies residues 1 to 25 (MKQVRLLPSAAVRAACALAAAALAG). The N-palmitoyl cysteine moiety is linked to residue Cys26. Cys26 is lipidated: S-diacylglycerol cysteine.

The protein belongs to the FlgH family. The basal body constitutes a major portion of the flagellar organelle and consists of four rings (L,P,S, and M) mounted on a central rod.

The protein resides in the cell outer membrane. Its subcellular location is the bacterial flagellum basal body. Its function is as follows. Assembles around the rod to form the L-ring and probably protects the motor/basal body from shearing forces during rotation. In Burkholderia multivorans (strain ATCC 17616 / 249), this protein is Flagellar L-ring protein.